The primary structure comprises 151 residues: Large ribosomal subunit protein eL19 (151 aa).

The span at 57 to 81 (KKGISSARVKKLKEQRKKGRRRGPG) shows a compositional bias: basic residues. Positions 57–95 (KKGISSARVKKLKEQRKKGRRRGPGSRRGAAGARTPPKE) are disordered.

It belongs to the eukaryotic ribosomal protein eL19 family. In terms of assembly, part of the 50S ribosomal subunit.

Binds to the 23S rRNA. This is Large ribosomal subunit protein eL19 from Methanocaldococcus jannaschii (strain ATCC 43067 / DSM 2661 / JAL-1 / JCM 10045 / NBRC 100440) (Methanococcus jannaschii).